The primary structure comprises 422 residues: Testin (422 aa).

Positions 92–199 (MILTSPVAAK…GDVKLPKEVE (108 aa)) constitute a PET domain. The disordered stretch occupies residues 135-165 (QPVAGSEGAQYRKKQLAKQLPAHDQDPSKCH). Residues 155–165 (PAHDQDPSKCH) are compositionally biased toward basic and acidic residues. LIM zinc-binding domains are found at residues 234–299 (YYCF…SEKP), 300–359 (RCAG…NHAV), and 360–422 (SCQG…KMSS).

It belongs to the prickle / espinas / testin family. Expressed in the animal hemisphere at the 4-cell stage. By stage 18, expressed in cells adjacent to the anterior neural plate. In late neurula, expressed in the cranial neural crest. At tail bud stages, expressed strongly in the head, ventral to the developing eye, branchial arches and lateral line placodes. Also localized in the otic vesicle, dorsal fin and notochord with weaker expression at intersomitic junctions of tail bud embryos.

It localises to the cytoplasm. The protein localises to the cell cortex. It is found in the cell junction. Its subcellular location is the focal adhesion. In terms of biological role, scaffold protein that may play a role in cell adhesion, cell spreading and in the reorganization of the actin cytoskeleton. May inhibit cell growth. Regulates cranial neural crest migration. Acts together with prickle1 to control axial elongation. The polypeptide is Testin (Xenopus laevis (African clawed frog)).